Reading from the N-terminus, the 219-residue chain is Formate dehydrogenase 2 subunit beta (cytochrome c-553) (219 aa).

Residues 3–32 form the 4Fe-4S ferredoxin-type 1 domain; sequence KAFLIDTTRCTACRGCQLACKEWHDLPANV. Residues Cys-12, Cys-15, Cys-18, Cys-22, Cys-74, Cys-77, Cys-82, Cys-124, Cys-141, Cys-144, Cys-156, and Cys-160 each contribute to the [4Fe-4S] cluster site. A 4Fe-4S ferredoxin-type 2 domain is found at 132-171; the sequence is DPKTKRITKCDMCFDRVSAGMQPICVKTCPTGTMAFGERD.

As to quaternary structure, heterotrimer of cytochrome c3 FDH2C and formate dehydrogenase FDH2 alpha and beta subunits that forms the FdhABC(3) complex. [4Fe-4S] cluster serves as cofactor.

It localises to the periplasm. In terms of biological role, beta chain of the formate dehydrogenase (FDH) that catalyzes the reversible two-electron oxidation of formate to carbon dioxide. The beta chain is an electron transfer unit. The protein is Formate dehydrogenase 2 subunit beta (cytochrome c-553) of Nitratidesulfovibrio vulgaris (strain ATCC 29579 / DSM 644 / CCUG 34227 / NCIMB 8303 / VKM B-1760 / Hildenborough) (Desulfovibrio vulgaris).